The primary structure comprises 325 residues: 5-dehydro-2-deoxygluconokinase (325 aa).

Belongs to the carbohydrate kinase PfkB family.

The enzyme catalyses 5-dehydro-2-deoxy-D-gluconate + ATP = 6-phospho-5-dehydro-2-deoxy-D-gluconate + ADP + H(+). Its pathway is polyol metabolism; myo-inositol degradation into acetyl-CoA; acetyl-CoA from myo-inositol: step 5/7. Functionally, catalyzes the phosphorylation of 5-dehydro-2-deoxy-D-gluconate (2-deoxy-5-keto-D-gluconate or DKG) to 6-phospho-5-dehydro-2-deoxy-D-gluconate (DKGP). The polypeptide is 5-dehydro-2-deoxygluconokinase (iolC) (Bacillus subtilis (strain 168)).